Here is a 169-residue protein sequence, read N- to C-terminus: Phosphopantetheine adenylyltransferase (169 aa).

Position 14 (T14) interacts with substrate. Residues 14–15 (TF) and H22 each bind ATP. 3 residues coordinate substrate: K46, L78, and R92. Residues 93-95 (GLR), E103, and 128-134 (HSFISSS) each bind ATP.

It belongs to the bacterial CoaD family. In terms of assembly, homohexamer. It depends on Mg(2+) as a cofactor.

The protein resides in the cytoplasm. The enzyme catalyses (R)-4'-phosphopantetheine + ATP + H(+) = 3'-dephospho-CoA + diphosphate. It functions in the pathway cofactor biosynthesis; coenzyme A biosynthesis; CoA from (R)-pantothenate: step 4/5. Reversibly transfers an adenylyl group from ATP to 4'-phosphopantetheine, yielding dephospho-CoA (dPCoA) and pyrophosphate. This is Phosphopantetheine adenylyltransferase from Stenotrophomonas maltophilia (strain R551-3).